Reading from the N-terminus, the 539-residue chain is CTP synthase (539 aa).

The amidoligase domain stretch occupies residues 1-267 (MTKYIFVTGG…DQKVVDFLHI (267 aa)). Ser-13 is a CTP binding site. Ser-13 lines the UTP pocket. Position 14-19 (14-19 (SLGKGI)) interacts with ATP. Tyr-54 serves as a coordination point for L-glutamine. Residue Asp-71 coordinates ATP. 2 residues coordinate Mg(2+): Asp-71 and Glu-141. CTP-binding positions include 148–150 (DME), 188–193 (KSKPTQ), and Lys-224. UTP is bound by residues 188 to 193 (KSKPTQ) and Lys-224. Residues 294 to 537 (KITLVGKYVE…IGAASGLQVD (244 aa)) form the Glutamine amidotransferase type-1 domain. Gly-356 contacts L-glutamine. The active-site Nucleophile; for glutamine hydrolysis is the Cys-383. L-glutamine-binding positions include 384 to 387 (LGMQ), Glu-407, and Arg-465. Active-site residues include His-510 and Glu-512.

Belongs to the CTP synthase family. In terms of assembly, homotetramer.

The enzyme catalyses UTP + L-glutamine + ATP + H2O = CTP + L-glutamate + ADP + phosphate + 2 H(+). It catalyses the reaction L-glutamine + H2O = L-glutamate + NH4(+). The catalysed reaction is UTP + NH4(+) + ATP = CTP + ADP + phosphate + 2 H(+). It participates in pyrimidine metabolism; CTP biosynthesis via de novo pathway; CTP from UDP: step 2/2. Its activity is regulated as follows. Allosterically activated by GTP, when glutamine is the substrate; GTP has no effect on the reaction when ammonia is the substrate. The allosteric effector GTP functions by stabilizing the protein conformation that binds the tetrahedral intermediate(s) formed during glutamine hydrolysis. Inhibited by the product CTP, via allosteric rather than competitive inhibition. Functionally, catalyzes the ATP-dependent amination of UTP to CTP with either L-glutamine or ammonia as the source of nitrogen. Regulates intracellular CTP levels through interactions with the four ribonucleotide triphosphates. In Lactobacillus delbrueckii subsp. bulgaricus (strain ATCC 11842 / DSM 20081 / BCRC 10696 / JCM 1002 / NBRC 13953 / NCIMB 11778 / NCTC 12712 / WDCM 00102 / Lb 14), this protein is CTP synthase.